Reading from the N-terminus, the 25-residue chain is Alanine racemase (25 aa).

Belongs to the alanine racemase family. In terms of assembly, homodimer. The cofactor is pyridoxal 5'-phosphate.

It catalyses the reaction L-alanine = D-alanine. It functions in the pathway amino-acid biosynthesis; D-alanine biosynthesis; D-alanine from L-alanine: step 1/1. Its function is as follows. Catalyzes the interconversion of L-alanine and D-alanine. The chain is Alanine racemase from Pseudomonas fluorescens.